The chain runs to 337 residues: DNA-directed RNA polymerase subunit alpha (337 aa).

The alpha N-terminal domain (alpha-NTD) stretch occupies residues 1-233 (MIQKNWQELI…DQLSIFVNFE (233 aa)). Positions 249–337 (FNPVLLKKVD…DLAKRYEDQY (89 aa)) are alpha C-terminal domain (alpha-CTD).

This sequence belongs to the RNA polymerase alpha chain family. Homodimer. The RNAP catalytic core consists of 2 alpha, 1 beta, 1 beta' and 1 omega subunit. When a sigma factor is associated with the core the holoenzyme is formed, which can initiate transcription.

It carries out the reaction RNA(n) + a ribonucleoside 5'-triphosphate = RNA(n+1) + diphosphate. Its function is as follows. DNA-dependent RNA polymerase catalyzes the transcription of DNA into RNA using the four ribonucleoside triphosphates as substrates. The polypeptide is DNA-directed RNA polymerase subunit alpha (Brucella canis (strain ATCC 23365 / NCTC 10854 / RM-666)).